We begin with the raw amino-acid sequence, 123 residues long: Probable cytochrome c 2.2 (123 aa).

Residues 1–21 are disordered; the sequence is MGKKKSDTASGGAIPEGDNEK. Cysteine 30, cysteine 33, histidine 34, and methionine 95 together coordinate heme c.

The protein belongs to the cytochrome c family. Post-translationally, binds 1 heme c group covalently per subunit.

It is found in the mitochondrion intermembrane space. Functionally, electron carrier protein. The oxidized form of the cytochrome c heme group can accept an electron from the heme group of the cytochrome c1 subunit of cytochrome reductase. Cytochrome c then transfers this electron to the cytochrome oxidase complex, the final protein carrier in the mitochondrial electron-transport chain. The chain is Probable cytochrome c 2.2 (cyc-2.2) from Caenorhabditis elegans.